We begin with the raw amino-acid sequence, 291 residues long: MMRIVIFLLTNLAVMVVFGILLTCVGTHSSNTVRLMIISGLFGFCGAFISLLMSKFIALRSVGGKVISQPQNETEHWLLNIILNQAQKIGITMPQVAIYNAPDMNAFATGPSRNNSLVAVSTGLLQNMPRTEIEAVIAHEISHISNGDMVTITLISGIVNTFVIFISRFLAQLTAGFIGSNNEESNNGNKLVYMIVSTILELAFGILASIIVLWFSRYREFYADAGSANIVGCDKMIAALQRLKTSYEPKVTNNIKIFCINGYQKSLSEFFMSHPPLNKRIEALRYGTYMK.

A run of 2 helical transmembrane segments spans residues Ile-4–Cys-24 and Ile-37–Ile-57. A Zn(2+)-binding site is contributed by His-139. Residue Glu-140 is part of the active site. His-143 contributes to the Zn(2+) binding site. A run of 2 helical transmembrane segments spans residues Gly-147 to Ser-167 and Ile-195 to Phe-215. Glu-220 provides a ligand contact to Zn(2+).

This sequence belongs to the peptidase M48B family. Requires Zn(2+) as cofactor.

Its subcellular location is the cell membrane. In Baumannia cicadellinicola subsp. Homalodisca coagulata, this protein is Protease HtpX.